Reading from the N-terminus, the 212-residue chain is Large ribosomal subunit protein uL1 (212 aa).

Belongs to the universal ribosomal protein uL1 family. In terms of assembly, part of the 50S ribosomal subunit.

Functionally, binds directly to 23S rRNA. Probably involved in E site tRNA release. Protein L1 is also a translational repressor protein, it controls the translation of its operon by binding to its mRNA. This is Large ribosomal subunit protein uL1 from Haloarcula marismortui (strain ATCC 43049 / DSM 3752 / JCM 8966 / VKM B-1809) (Halobacterium marismortui).